Here is a 456-residue protein sequence, read N- to C-terminus: Solute carrier family 49 member 4 homolog (456 aa).

Over 1-29 (MGLEWSSPGERQPLLYPGGPRAPRVFGRR) the chain is Cytoplasmic. The Di-leucine motif; mediates lysosomal localization signature appears at 14 to 15 (LL). Residues 30-50 (WLVLLLFSLLAFLQGLVWNSW) form a helical membrane-spanning segment. At 51–67 (GPIQNSARTAYNFSGLD) the chain is on the lumenal side. N62 is a glycosylation site (N-linked (GlcNAc...) asparagine). The helical transmembrane segment at 68–88 (IALLVLWGPIGFLPCFLFMWL) threads the bilayer. Residues 89 to 95 (MDNRGLR) are Cytoplasmic-facing. Residues 96 to 116 (VTVLLTALLMVLGAGLRCVPV) traverse the membrane as a helical segment. The Lumenal portion of the chain corresponds to 117 to 131 (QDLAVRRKLIHGGQL). The helical transmembrane segment at 132-152 (LNGFAGPTVMNAAPFLSTTWF) threads the bilayer. The Cytoplasmic segment spans residues 153–162 (SPDERATATA). The chain crosses the membrane as a helical span at residues 163–183 (IASMLSYLGGACAFLVGPLVV). Over 184–207 (PAPNSTSGLLLYSGSVGAIRDRIE) the chain is Lumenal. N187 is a glycosylation site (N-linked (GlcNAc...) asparagine). The helical transmembrane segment at 208-228 (AVMYAEFGIIFVVFAAILAYF) threads the bilayer. The Cytoplasmic segment spans residues 229 to 259 (PSRPPVPPSVAAASRRLSYRTSILRLLSNVR). The helical transmembrane segment at 260–280 (FLLIVLAYAIPLGFYAGWSGV) threads the bilayer. Residues 281-292 (LDLILTPVHVTQ) are Lumenal-facing. A helical transmembrane segment spans residues 293–313 (VDAGWVGFWSIVGGCVVGIAV). Residues 314–326 (GRFADSIRGVLKP) lie on the Cytoplasmic side of the membrane. The helical transmembrane segment at 327-347 (ILLLLFSGAALSSTWFTLTFL) threads the bilayer. The Lumenal portion of the chain corresponds to 348–362 (SNVTHLPLTTATLYT). N-linked (GlcNAc...) asparagine glycosylation occurs at N349. Residues 363–383 (SCILIGVFLSGTVPIFFEMFV) form a helical membrane-spanning segment. The Cytoplasmic portion of the chain corresponds to 384–392 (ETVYPIPEG). A helical transmembrane segment spans residues 393-413 (ITCGVVTFLSNLFMGVLLLFL). At 414 to 420 (TLYQTNL) the chain is on the lumenal side. A glycan (N-linked (GlcNAc...) asparagine) is linked at N419. Residues 421-441 (SWLNWCLTGSCFLSLLFIACF) form a helical membrane-spanning segment. The Cytoplasmic segment spans residues 442–456 (RESYDRLYLDVFVSV).

It belongs to the major facilitator superfamily.

The protein resides in the lysosome membrane. It carries out the reaction pyridoxine(out) + n H(+)(out) = pyridoxine(in) + n H(+)(in). In terms of biological role, mediates H(+)-dependent pyridoxine transport. The sequence is that of Solute carrier family 49 member 4 homolog (slc49a4) from Xenopus tropicalis (Western clawed frog).